The sequence spans 216 residues: Refilin-A (216 aa).

The segment at 1–83 is disordered; it reads MVGHLHLQGM…LPNPPASEMR (83 aa). Residues 12 to 22 show a composition bias toward basic and acidic residues; sequence DSLKEQGREGL. A compositionally biased stretch (pro residues) spans 29-39; the sequence is GLPPSPSPSPP. Residues 57-71 show a composition bias toward low complexity; that stretch reads ASSEPPGPSEARAPP. At R163 the chain carries Asymmetric dimethylarginine.

The protein belongs to the Refilin family. Interacts with FLNA and FLNB.

It is found in the cytoplasm. The protein localises to the cytoskeleton. In terms of biological role, involved in the regulation of the perinuclear actin network and nuclear shape through interaction with filamins. Plays an essential role in actin cytoskeleton formation in developing cartilaginous cells. The polypeptide is Refilin-A (Homo sapiens (Human)).